A 121-amino-acid polypeptide reads, in one-letter code: Non-structural protein 8 (121 aa).

A signal peptide spans 1-15 (MKLLIVFGLLTSVYC). In terms of domain architecture, SARS ORF8 Ig-like spans 19–121 (ECSIQECCEN…HDVRVVLDFI (103 aa)). Intrachain disulfides connect C25-C90, C37-C102, and C61-C83.

The protein is Non-structural protein 8 of Rhinolophus macrotis (Big-eared horseshoe bat).